The sequence spans 109 residues: uncharacterized protein (109 aa).

The first 23 residues, 1-23 (MKNYNFILISLFIIFFIILNISS), serve as a signal peptide directing secretion. A glycan (N-linked (GlcNAc...) asparagine) is linked at Asn-27. The tract at residues 45–109 (YQEYMENRTP…KKDQQNQQQN (65 aa)) is disordered. Over residues 54 to 72 (PNEQQQQQQQQQNNNNPPQ) the composition is skewed to low complexity. Residues 94–103 (KLKEKLKKDQ) show a composition bias toward basic and acidic residues.

The protein localises to the secreted. This is an uncharacterized protein from Dictyostelium discoideum (Social amoeba).